Reading from the N-terminus, the 363-residue chain is Pyrimidine monooxygenase RutA (363 aa).

FMN-binding positions include 49-50, Asn115, Glu124, 140-141, and Ser190; these read IK and RY.

It belongs to the NtaA/SnaA/DszA monooxygenase family. RutA subfamily.

It catalyses the reaction uracil + FMNH2 + NADH + O2 = (Z)-3-ureidoacrylate + FMN + NAD(+) + H2O + H(+). The enzyme catalyses thymine + FMNH2 + NADH + O2 = (Z)-2-methylureidoacrylate + FMN + NAD(+) + H2O + H(+). In terms of biological role, catalyzes the pyrimidine ring opening between N-3 and C-4 by an unusual flavin hydroperoxide-catalyzed mechanism, adding oxygen atoms in the process to yield ureidoacrylate peracid, that immediately reacts with FMN forming ureidoacrylate and FMN-N(5)-oxide. The FMN-N(5)-oxide reacts spontaneously with NADH to produce FMN. Requires the flavin reductase RutF to regenerate FMN in vivo. This is Pyrimidine monooxygenase RutA from Pantoea ananatis (strain LMG 20103).